A 491-amino-acid chain; its full sequence is Probable cobyric acid synthase (491 aa).

Positions 252–444 constitute a GATase cobBQ-type domain; it reads PVEVNIVKFS…LHGILENFEF (193 aa). Residue Cys-330 is the Nucleophile of the active site. Residue His-436 is part of the active site.

It belongs to the CobB/CobQ family. CobQ subfamily.

The protein operates within cofactor biosynthesis; adenosylcobalamin biosynthesis. Functionally, catalyzes amidations at positions B, D, E, and G on adenosylcobyrinic A,C-diamide. NH(2) groups are provided by glutamine, and one molecule of ATP is hydrogenolyzed for each amidation. The polypeptide is Probable cobyric acid synthase (Methanococcus vannielii (strain ATCC 35089 / DSM 1224 / JCM 13029 / OCM 148 / SB)).